A 94-amino-acid chain; its full sequence is Aspartyl/glutamyl-tRNA(Asn/Gln) amidotransferase subunit C (94 aa).

It belongs to the GatC family. As to quaternary structure, heterotrimer of A, B and C subunits.

The enzyme catalyses L-glutamyl-tRNA(Gln) + L-glutamine + ATP + H2O = L-glutaminyl-tRNA(Gln) + L-glutamate + ADP + phosphate + H(+). It catalyses the reaction L-aspartyl-tRNA(Asn) + L-glutamine + ATP + H2O = L-asparaginyl-tRNA(Asn) + L-glutamate + ADP + phosphate + 2 H(+). Functionally, allows the formation of correctly charged Asn-tRNA(Asn) or Gln-tRNA(Gln) through the transamidation of misacylated Asp-tRNA(Asn) or Glu-tRNA(Gln) in organisms which lack either or both of asparaginyl-tRNA or glutaminyl-tRNA synthetases. The reaction takes place in the presence of glutamine and ATP through an activated phospho-Asp-tRNA(Asn) or phospho-Glu-tRNA(Gln). This is Aspartyl/glutamyl-tRNA(Asn/Gln) amidotransferase subunit C from Campylobacter jejuni subsp. doylei (strain ATCC BAA-1458 / RM4099 / 269.97).